We begin with the raw amino-acid sequence, 398 residues long: tRNA-specific 2-thiouridylase MnmA (398 aa).

ATP-binding positions include 18–25 (AMSGGVDS) and Leu-44. Catalysis depends on Cys-112, which acts as the Nucleophile. Cys-112 and Cys-213 are oxidised to a cystine. Gly-136 serves as a coordination point for ATP. Residues 163–165 (RDQ) form an interaction with tRNA region. The active-site Cysteine persulfide intermediate is Cys-213.

It belongs to the MnmA/TRMU family.

The protein resides in the cytoplasm. The catalysed reaction is S-sulfanyl-L-cysteinyl-[protein] + uridine(34) in tRNA + AH2 + ATP = 2-thiouridine(34) in tRNA + L-cysteinyl-[protein] + A + AMP + diphosphate + H(+). In terms of biological role, catalyzes the 2-thiolation of uridine at the wobble position (U34) of tRNA, leading to the formation of s(2)U34. The polypeptide is tRNA-specific 2-thiouridylase MnmA (Rhizobium meliloti (strain 1021) (Ensifer meliloti)).